We begin with the raw amino-acid sequence, 123 residues long: MPSTGTLVILFAIILILCIMLLFYYKTTEAGNPGVLPPPIPPPTPPPPKKKYDHNEYMEKTDLEPEVKKNHRKWANEAEHLISSSVKGLENLDETAFLANHKGHGFRTFEHAKSLFKEFLKKY.

A helical membrane pass occupies residues 5 to 25 (GTLVILFAIILILCIMLLFYY).

The protein belongs to the asfivirus CP123L family.

Its subcellular location is the host membrane. The protein resides in the virion. This is an uncharacterized protein from Ornithodoros (relapsing fever ticks).